A 488-amino-acid chain; its full sequence is Germacrene A hydroxylase (488 aa).

At 1–6 (MELSIT) the chain is on the cytoplasmic side. A helical; Signal-anchor for type II membrane protein transmembrane segment spans residues 7 to 23 (TSIALATIVFFLYKLAT). Over 24 to 488 (RPKSTKKQLP…KTELLLVPSF (465 aa)) the chain is Lumenal. 3 N-linked (GlcNAc...) asparagine glycosylation sites follow: Asn169, Asn260, and Asn379. Cys432 contacts heme.

This sequence belongs to the cytochrome P450 family. Heme serves as cofactor.

It is found in the endoplasmic reticulum membrane. The enzyme catalyses (+)-(R)-germacrene A + 3 reduced [NADPH--hemoprotein reductase] + 3 O2 = germacra-1(10),4,11(13)-trien-12-oate + 3 oxidized [NADPH--hemoprotein reductase] + 4 H2O + 4 H(+). It functions in the pathway secondary metabolite biosynthesis; terpenoid biosynthesis. In terms of biological role, involved in the biosynthesis of germacrene-derived sesquiterpene lactones. Catalyzes three consecutive oxidations of germacrene A to produce germacrene A acid. Could also catalyze the three-step oxidation of non-natural substrate amorphadiene to artemisinic acid. This Lactuca sativa (Garden lettuce) protein is Germacrene A hydroxylase.